A 1123-amino-acid polypeptide reads, in one-letter code: Phytochrome 1 (1123 aa).

Over residues 1–15 the composition is skewed to low complexity; that stretch reads MSTPKKTYSSTSSAK. Residues 1 to 20 form a disordered region; it reads MSTPKKTYSSTSSAKSKAHS. One can recognise a GAF domain in the interval 216 to 395; it reads DIGLLCDTVV…VFGLQLNMEV (180 aa). Position 321 (Cys321) interacts with phytochromobilin. 2 PAS domains span residues 610-681 and 744-815; these read VANE…LRGE and DYKT…TKFM. Residues 895–1115 form the Histidine kinase domain; sequence YIRQEIKNPL…VVNVELPMAQ (221 aa).

It belongs to the phytochrome family. As to quaternary structure, homodimer. Contains one covalently linked phytochromobilin chromophore.

Its subcellular location is the cytoplasm. Regulatory photoreceptor which exists in two forms that are reversibly interconvertible by light: the Pr form that absorbs maximally in the red region of the spectrum and the Pfr form that absorbs maximally in the far-red region. Photoconversion of Pr to Pfr induces an array of morphogenetic responses, whereas reconversion of Pfr to Pr cancels the induction of those responses. Pfr controls the expression of a number of nuclear genes including those encoding the small subunit of ribulose-bisphosphate carboxylase, chlorophyll A/B binding protein, protochlorophyllide reductase, rRNA, etc. It also controls the expression of its own gene(s) in a negative feedback fashion. Mediates chloroplast avoidance movement in cytoplasm. The polypeptide is Phytochrome 1 (PHY1) (Physcomitrium patens (Spreading-leaved earth moss)).